Here is a 463-residue protein sequence, read N- to C-terminus: Kynureninase 2 (463 aa).

Residues Leu-134, Thr-135, Phe-162–Asp-165, Asp-247, His-250, and Tyr-272 contribute to the pyridoxal 5'-phosphate site. Residue Lys-273 is modified to N6-(pyridoxal phosphate)lysine. Pyridoxal 5'-phosphate-binding residues include Trp-312 and Asn-340.

This sequence belongs to the kynureninase family. Homodimer. Pyridoxal 5'-phosphate serves as cofactor.

It localises to the cytoplasm. The catalysed reaction is L-kynurenine + H2O = anthranilate + L-alanine + H(+). The enzyme catalyses 3-hydroxy-L-kynurenine + H2O = 3-hydroxyanthranilate + L-alanine + H(+). It functions in the pathway amino-acid degradation; L-kynurenine degradation; L-alanine and anthranilate from L-kynurenine: step 1/1. It participates in cofactor biosynthesis; NAD(+) biosynthesis; quinolinate from L-kynurenine: step 2/3. In terms of biological role, catalyzes the cleavage of L-kynurenine (L-Kyn) and L-3-hydroxykynurenine (L-3OHKyn) into anthranilic acid (AA) and 3-hydroxyanthranilic acid (3-OHAA), respectively. The chain is Kynureninase 2 (bna5-2) from Aspergillus niger (strain ATCC MYA-4892 / CBS 513.88 / FGSC A1513).